A 91-amino-acid chain; its full sequence is Large ribosomal subunit protein uL22 (91 aa).

Belongs to the universal ribosomal protein uL22 family. As to quaternary structure, part of the 50S ribosomal subunit.

This protein binds specifically to 23S rRNA; its binding is stimulated by other ribosomal proteins, e.g. L4, L17, and L20. It is important during the early stages of 50S assembly. It makes multiple contacts with different domains of the 23S rRNA in the assembled 50S subunit and ribosome. In terms of biological role, the globular domain of the protein is located near the polypeptide exit tunnel on the outside of the subunit, while an extended beta-hairpin is found that lines the wall of the exit tunnel in the center of the 70S ribosome. The sequence is that of Large ribosomal subunit protein uL22 (rplV) from Pigeon pea witches'-broom phytoplasma.